We begin with the raw amino-acid sequence, 435 residues long: Citrate synthase (435 aa).

Residues His311 and Asp370 contribute to the active site.

The protein belongs to the citrate synthase family.

It carries out the reaction oxaloacetate + acetyl-CoA + H2O = citrate + CoA + H(+). It functions in the pathway carbohydrate metabolism; tricarboxylic acid cycle; isocitrate from oxaloacetate: step 1/2. This is Citrate synthase (gltA) from Rickettsia bellii (strain RML369-C).